A 273-amino-acid polypeptide reads, in one-letter code: 4-hydroxy-tetrahydrodipicolinate reductase (273 aa).

NAD(+) is bound by residues 8–13, Glu-34, 102–104, and 128–131; these read GAAGRM, GTT, and SSNM. Residue His-160 is the Proton donor/acceptor of the active site. Residue His-161 participates in (S)-2,3,4,5-tetrahydrodipicolinate binding. Catalysis depends on Lys-164, which acts as the Proton donor. Position 170–171 (170–171) interacts with (S)-2,3,4,5-tetrahydrodipicolinate; sequence GT.

The protein belongs to the DapB family.

The protein resides in the cytoplasm. The catalysed reaction is (S)-2,3,4,5-tetrahydrodipicolinate + NAD(+) + H2O = (2S,4S)-4-hydroxy-2,3,4,5-tetrahydrodipicolinate + NADH + H(+). The enzyme catalyses (S)-2,3,4,5-tetrahydrodipicolinate + NADP(+) + H2O = (2S,4S)-4-hydroxy-2,3,4,5-tetrahydrodipicolinate + NADPH + H(+). The protein operates within amino-acid biosynthesis; L-lysine biosynthesis via DAP pathway; (S)-tetrahydrodipicolinate from L-aspartate: step 4/4. Catalyzes the conversion of 4-hydroxy-tetrahydrodipicolinate (HTPA) to tetrahydrodipicolinate. The sequence is that of 4-hydroxy-tetrahydrodipicolinate reductase from Methanobrevibacter smithii (strain ATCC 35061 / DSM 861 / OCM 144 / PS).